We begin with the raw amino-acid sequence, 333 residues long: Nucleoid-associated protein (333 aa).

This sequence belongs to the YejK family.

It localises to the cytoplasm. The protein resides in the nucleoid. The chain is Nucleoid-associated protein from Metapseudomonas resinovorans (Pseudomonas resinovorans).